The primary structure comprises 150 residues: Large ribosomal subunit protein bL9 (150 aa).

This sequence belongs to the bacterial ribosomal protein bL9 family.

Binds to the 23S rRNA. This Streptococcus pyogenes serotype M2 (strain MGAS10270) protein is Large ribosomal subunit protein bL9.